The following is a 428-amino-acid chain: MASWDNLGELSNIAQLTGLDAVKLISLIVRAASTARLHKRNCRRFAQHLKLIGGLLEQLRVSELRKYPETREPLEQLEDALRRGYLLVNSCQDRSYLYLLAMGWNIVYQFRKAQSEIDNYLRLVPLITLVDNARIRDRLEYIERDQCEYSFDEEDKKVQDALLNPDPCTNPTIVLKKTLSCSYPNLPFNEALRKESEKLQVELQRSQSNMDLGSCEVIQHLLGVTKTVESTIPEKETNVKAPEKKGSNYSESKGETAKSFDDDDDYPKKQNGDYPKKQKDTCSTQRCSSQVPYGHDLVSSRGSYSDEWHADLLGCCSKPALCLKTLFFPCGTFSRIASIAKDRPMSSGEACNDIMAYSLILSCCCYTCCVRRKLRQKLDIAGGCCDDFLSHLLCCCCALVQEWREVEIRGAYSEKTKVTPPACQYMEH.

Over residues P233–D280 the composition is skewed to basic and acidic residues. The segment at P233–Q290 is disordered. The segment covering T281–Q290 has biased composition (polar residues). A helical transmembrane segment spans residues I354 to V370.

As to expression, expressed in roots, coleoptiles, leaves, stalks, apical meristems, immature ears, embryos, endosperm, pericarp, silks and tassel spikelets. Not detected in pollen.

It localises to the membrane. This chain is Cell number regulator 13 (CNR13), found in Zea mays (Maize).